The sequence spans 174 residues: NADH-quinone oxidoreductase subunit B 2 (174 aa).

Residues Cys53, Cys54, Cys118, and Cys148 each contribute to the [4Fe-4S] cluster site.

Belongs to the complex I 20 kDa subunit family. NDH-1 is composed of 14 different subunits. Subunits NuoB, C, D, E, F, and G constitute the peripheral sector of the complex. [4Fe-4S] cluster serves as cofactor.

The protein resides in the cell inner membrane. The enzyme catalyses a quinone + NADH + 5 H(+)(in) = a quinol + NAD(+) + 4 H(+)(out). In terms of biological role, NDH-1 shuttles electrons from NADH, via FMN and iron-sulfur (Fe-S) centers, to quinones in the respiratory chain. Couples the redox reaction to proton translocation (for every two electrons transferred, four hydrogen ions are translocated across the cytoplasmic membrane), and thus conserves the redox energy in a proton gradient. This chain is NADH-quinone oxidoreductase subunit B 2, found in Cereibacter sphaeroides (strain ATCC 17025 / ATH 2.4.3) (Rhodobacter sphaeroides).